The sequence spans 175 residues: Small ribosomal subunit protein bS16 (175 aa).

It belongs to the bacterial ribosomal protein bS16 family.

The polypeptide is Small ribosomal subunit protein bS16 (Cytophaga hutchinsonii (strain ATCC 33406 / DSM 1761 / CIP 103989 / NBRC 15051 / NCIMB 9469 / D465)).